We begin with the raw amino-acid sequence, 173 residues long: Crossover junction endodeoxyribonuclease RuvC (173 aa).

Catalysis depends on residues aspartate 8, glutamate 67, and aspartate 139. Mg(2+)-binding residues include aspartate 8, glutamate 67, and aspartate 139.

It belongs to the RuvC family. Homodimer which binds Holliday junction (HJ) DNA. The HJ becomes 2-fold symmetrical on binding to RuvC with unstacked arms; it has a different conformation from HJ DNA in complex with RuvA. In the full resolvosome a probable DNA-RuvA(4)-RuvB(12)-RuvC(2) complex forms which resolves the HJ. Mg(2+) serves as cofactor.

It is found in the cytoplasm. The enzyme catalyses Endonucleolytic cleavage at a junction such as a reciprocal single-stranded crossover between two homologous DNA duplexes (Holliday junction).. Its function is as follows. The RuvA-RuvB-RuvC complex processes Holliday junction (HJ) DNA during genetic recombination and DNA repair. Endonuclease that resolves HJ intermediates. Cleaves cruciform DNA by making single-stranded nicks across the HJ at symmetrical positions within the homologous arms, yielding a 5'-phosphate and a 3'-hydroxyl group; requires a central core of homology in the junction. The consensus cleavage sequence is 5'-(A/T)TT(C/G)-3'. Cleavage occurs on the 3'-side of the TT dinucleotide at the point of strand exchange. HJ branch migration catalyzed by RuvA-RuvB allows RuvC to scan DNA until it finds its consensus sequence, where it cleaves and resolves the cruciform DNA. This chain is Crossover junction endodeoxyribonuclease RuvC, found in Aliivibrio fischeri (strain ATCC 700601 / ES114) (Vibrio fischeri).